The primary structure comprises 396 residues: L-lactate dehydrogenase (396 aa).

One can recognise an FMN hydroxy acid dehydrogenase domain in the interval Met-1–Gly-380. Tyr-24 is a binding site for substrate. Positions 106 and 127 each coordinate FMN. Tyr-129 is a binding site for substrate. Thr-155 lines the FMN pocket. Position 164 (Arg-164) interacts with substrate. Lys-251 contacts FMN. His-275 functions as the Proton acceptor in the catalytic mechanism. A substrate-binding site is contributed by Arg-278. Asp-306–Arg-330 is a binding site for FMN.

This sequence belongs to the FMN-dependent alpha-hydroxy acid dehydrogenase family. The cofactor is FMN.

It localises to the cell inner membrane. The enzyme catalyses (S)-lactate + A = pyruvate + AH2. Its function is as follows. Catalyzes the conversion of L-lactate to pyruvate. Is coupled to the respiratory chain. The protein is L-lactate dehydrogenase of Salmonella schwarzengrund (strain CVM19633).